A 174-amino-acid polypeptide reads, in one-letter code: N5-carboxyaminoimidazole ribonucleotide mutase (174 aa).

Residues Ser-15, Asp-18, and Arg-45 each coordinate substrate.

Belongs to the AIR carboxylase family. Class I subfamily.

The catalysed reaction is 5-carboxyamino-1-(5-phospho-D-ribosyl)imidazole + H(+) = 5-amino-1-(5-phospho-D-ribosyl)imidazole-4-carboxylate. It functions in the pathway purine metabolism; IMP biosynthesis via de novo pathway; 5-amino-1-(5-phospho-D-ribosyl)imidazole-4-carboxylate from 5-amino-1-(5-phospho-D-ribosyl)imidazole (N5-CAIR route): step 2/2. Catalyzes the conversion of N5-carboxyaminoimidazole ribonucleotide (N5-CAIR) to 4-carboxy-5-aminoimidazole ribonucleotide (CAIR). This Pyrococcus abyssi (strain GE5 / Orsay) protein is N5-carboxyaminoimidazole ribonucleotide mutase.